The primary structure comprises 223 residues: Deoxyribose-phosphate aldolase (223 aa).

Asp91 acts as the Proton donor/acceptor in catalysis. Lys153 serves as the catalytic Schiff-base intermediate with acetaldehyde. Lys182 acts as the Proton donor/acceptor in catalysis.

The protein belongs to the DeoC/FbaB aldolase family. DeoC type 1 subfamily.

It is found in the cytoplasm. The catalysed reaction is 2-deoxy-D-ribose 5-phosphate = D-glyceraldehyde 3-phosphate + acetaldehyde. It participates in carbohydrate degradation; 2-deoxy-D-ribose 1-phosphate degradation; D-glyceraldehyde 3-phosphate and acetaldehyde from 2-deoxy-alpha-D-ribose 1-phosphate: step 2/2. Functionally, catalyzes a reversible aldol reaction between acetaldehyde and D-glyceraldehyde 3-phosphate to generate 2-deoxy-D-ribose 5-phosphate. This chain is Deoxyribose-phosphate aldolase, found in Yersinia pseudotuberculosis serotype O:1b (strain IP 31758).